Here is a 441-residue protein sequence, read N- to C-terminus: Serine hydroxymethyltransferase (441 aa).

(6S)-5,6,7,8-tetrahydrofolate-binding positions include L119 and 123–125; that span reads GHL. K228 carries the N6-(pyridoxal phosphate)lysine modification. Residue 370–372 participates in (6S)-5,6,7,8-tetrahydrofolate binding; the sequence is SPF.

It belongs to the SHMT family. As to quaternary structure, homodimer. Pyridoxal 5'-phosphate is required as a cofactor.

It is found in the cytoplasm. The enzyme catalyses (6R)-5,10-methylene-5,6,7,8-tetrahydrofolate + glycine + H2O = (6S)-5,6,7,8-tetrahydrofolate + L-serine. It participates in one-carbon metabolism; tetrahydrofolate interconversion. The protein operates within amino-acid biosynthesis; glycine biosynthesis; glycine from L-serine: step 1/1. In terms of biological role, catalyzes the reversible interconversion of serine and glycine with tetrahydrofolate (THF) serving as the one-carbon carrier. This reaction serves as the major source of one-carbon groups required for the biosynthesis of purines, thymidylate, methionine, and other important biomolecules. Also exhibits THF-independent aldolase activity toward beta-hydroxyamino acids, producing glycine and aldehydes, via a retro-aldol mechanism. The chain is Serine hydroxymethyltransferase from Chlorobium phaeovibrioides (strain DSM 265 / 1930) (Prosthecochloris vibrioformis (strain DSM 265)).